Consider the following 142-residue polypeptide: uncharacterized protein (142 aa).

The interval 1–22 (MSGSVNQNTDQHSQDSSSTPNN) is disordered. Helical transmembrane passes span 63 to 83 (LFVM…VLLV) and 109 to 129 (IIDG…FVDL).

The protein resides in the membrane. This is an uncharacterized protein from Acanthamoeba polyphaga mimivirus (APMV).